The sequence spans 573 residues: Potassium-transporting ATPase potassium-binding subunit (573 aa).

The next 10 helical transmembrane spans lie at 3 to 23, 65 to 85, 136 to 156, 179 to 199, 254 to 274, 286 to 306, 383 to 403, 423 to 443, 489 to 509, and 531 to 551; these read AEGL…TPLL, GYTL…YALL, GLTV…VALI, LYVL…QGVP, LTNL…IYSF, ALWT…WWAE, AGLY…GLMV, VIAV…TTVV, GLGL…LAIA, and LFIT…FFPA.

The protein belongs to the KdpA family. In terms of assembly, the system is composed of three essential subunits: KdpA, KdpB and KdpC.

It localises to the cell inner membrane. In terms of biological role, part of the high-affinity ATP-driven potassium transport (or Kdp) system, which catalyzes the hydrolysis of ATP coupled with the electrogenic transport of potassium into the cytoplasm. This subunit binds the periplasmic potassium ions and delivers the ions to the membrane domain of KdpB through an intramembrane tunnel. This is Potassium-transporting ATPase potassium-binding subunit from Rhodospirillum centenum (strain ATCC 51521 / SW).